The chain runs to 297 residues: Pyridoxal 5'-phosphate synthase subunit Pdx1 (297 aa).

A D-ribose 5-phosphate-binding site is contributed by Asp-27. Catalysis depends on Lys-84, which acts as the Schiff-base intermediate with D-ribose 5-phosphate. Gly-156 serves as a coordination point for D-ribose 5-phosphate. Arg-168 lines the D-glyceraldehyde 3-phosphate pocket. D-ribose 5-phosphate is bound by residues Gly-217 and Gly-238–Ser-239.

The protein belongs to the PdxS/SNZ family. As to quaternary structure, homohexamer and homododecamer. In the presence of Pdx2, forms a dodecamer of heterodimers.

The enzyme catalyses aldehydo-D-ribose 5-phosphate + D-glyceraldehyde 3-phosphate + L-glutamine = pyridoxal 5'-phosphate + L-glutamate + phosphate + 3 H2O + H(+). Its pathway is cofactor biosynthesis; pyridoxal 5'-phosphate biosynthesis. Its function is as follows. Catalyzes the formation of pyridoxal 5'-phosphate from ribose 5-phosphate (RBP), glyceraldehyde 3-phosphate (G3P) and ammonia. The ammonia is provided by Pdx2. Can also use ribulose 5-phosphate and dihydroxyacetone phosphate as substrates, resulting from enzyme-catalyzed isomerization of RBP and G3P, respectively. This chain is Pyridoxal 5'-phosphate synthase subunit Pdx1, found in Plasmodium berghei.